Reading from the N-terminus, the 76-residue chain is Large ribosomal subunit protein bL31 (76 aa).

Zn(2+) contacts are provided by cysteine 16, cysteine 18, cysteine 38, and cysteine 41.

Belongs to the bacterial ribosomal protein bL31 family. Type A subfamily. Part of the 50S ribosomal subunit. The cofactor is Zn(2+).

Functionally, binds the 23S rRNA. This is Large ribosomal subunit protein bL31 from Nocardia farcinica (strain IFM 10152).